A 357-amino-acid chain; its full sequence is Homoarginine-6-hydroxylase 2-ODD-C23.2 (357 aa).

Residues 208–308 (PFWVMRIIGY…RVCVAFFYET (101 aa)) form the Fe2OG dioxygenase domain. Positions 231, 233, and 289 each coordinate Fe cation. A 2-oxoglutarate-binding site is contributed by Arg-299.

This sequence belongs to the iron/ascorbate-dependent oxidoreductase family. Fe(2+) serves as cofactor. As to expression, expressed in senescent leaves.

Its subcellular location is the cytoplasm. The protein resides in the cytosol. The catalysed reaction is L-homoarginine + 2-oxoglutarate + O2 = 6-hydroxy-L-homoarginine + succinate + CO2. It carries out the reaction L-arginine + 2-oxoglutarate + O2 = 5-hydroxy-L-arginine + succinate + CO2. Slightly inhibited by canavanine (Can), the 5-oxa-analog of arginine. Functionally, 2-oxoglutarate-dependent dioxygenase catalyzing homoarginine 6-hydroxylation and arginine-5-hydroxylation thus producing 6-hydroxy-L-homoarginine and 5-hydroxy-L-arginine, respectively. Guanidine (Gd) is in turn synthesized by the spontaneous conversion of 6-hydroxy-L-homoarginine and 5-hydroxy-L-arginine to (S)-2-amino-6-oxohexanoate (RHEA:79843) and L-glutamate 5-semialdehyde (RHEA:31527); guanidine is a nitrogen-rich compound that may serve as a defense or signaling substance. The protein is Homoarginine-6-hydroxylase 2-ODD-C23.2 of Arabidopsis thaliana (Mouse-ear cress).